The chain runs to 454 residues: Bifunctional protein GlmU (454 aa).

The tract at residues 1 to 226 is pyrophosphorylase; it reads MTTTVIILAA…AFEVEGVNDR (226 aa). UDP-N-acetyl-alpha-D-glucosamine-binding positions include 8 to 11, K22, Q73, 78 to 79, 100 to 102, G137, E151, N166, and N224; these read LAAG, GT, and YGD. D102 serves as a coordination point for Mg(2+). N224 is a Mg(2+) binding site. The tract at residues 227 to 247 is linker; that stretch reads LQLAALEREFQLQQAKSLMQQ. Residues 248–454 form an N-acetyltransferase region; it reads GVTLTDPSRF…NYQRPQKLKK (207 aa). Residues R330 and K348 each contribute to the UDP-N-acetyl-alpha-D-glucosamine site. H360 functions as the Proton acceptor in the catalytic mechanism. Residues Y363 and N374 each coordinate UDP-N-acetyl-alpha-D-glucosamine. Residues A377, 383-384, S402, A420, and R437 each bind acetyl-CoA; that span reads NY.

In the N-terminal section; belongs to the N-acetylglucosamine-1-phosphate uridyltransferase family. The protein in the C-terminal section; belongs to the transferase hexapeptide repeat family. As to quaternary structure, homotrimer. The cofactor is Mg(2+).

Its subcellular location is the cytoplasm. The enzyme catalyses alpha-D-glucosamine 1-phosphate + acetyl-CoA = N-acetyl-alpha-D-glucosamine 1-phosphate + CoA + H(+). The catalysed reaction is N-acetyl-alpha-D-glucosamine 1-phosphate + UTP + H(+) = UDP-N-acetyl-alpha-D-glucosamine + diphosphate. Its pathway is nucleotide-sugar biosynthesis; UDP-N-acetyl-alpha-D-glucosamine biosynthesis; N-acetyl-alpha-D-glucosamine 1-phosphate from alpha-D-glucosamine 6-phosphate (route II): step 2/2. It functions in the pathway nucleotide-sugar biosynthesis; UDP-N-acetyl-alpha-D-glucosamine biosynthesis; UDP-N-acetyl-alpha-D-glucosamine from N-acetyl-alpha-D-glucosamine 1-phosphate: step 1/1. The protein operates within bacterial outer membrane biogenesis; LPS lipid A biosynthesis. Functionally, catalyzes the last two sequential reactions in the de novo biosynthetic pathway for UDP-N-acetylglucosamine (UDP-GlcNAc). The C-terminal domain catalyzes the transfer of acetyl group from acetyl coenzyme A to glucosamine-1-phosphate (GlcN-1-P) to produce N-acetylglucosamine-1-phosphate (GlcNAc-1-P), which is converted into UDP-GlcNAc by the transfer of uridine 5-monophosphate (from uridine 5-triphosphate), a reaction catalyzed by the N-terminal domain. In Acinetobacter baylyi (strain ATCC 33305 / BD413 / ADP1), this protein is Bifunctional protein GlmU.